A 122-amino-acid chain; its full sequence is Acidic phospholipase A2 Tpu-E6c (122 aa).

7 disulfides stabilise this stretch: Cys26-Cys115, Cys28-Cys44, Cys43-Cys95, Cys49-Cys122, Cys50-Cys88, Cys57-Cys81, and Cys75-Cys86. 3 residues coordinate Ca(2+): Tyr27, Gly29, and Gly31. His47 is a catalytic residue. Residue Asp48 participates in Ca(2+) binding. Asp89 is an active-site residue.

In terms of assembly, monomer. Ca(2+) is required as a cofactor. Expressed by the venom gland.

It is found in the secreted. The catalysed reaction is a 1,2-diacyl-sn-glycero-3-phosphocholine + H2O = a 1-acyl-sn-glycero-3-phosphocholine + a fatty acid + H(+). Its function is as follows. Snake venom phospholipase A2 (PLA2) that impairs hemostasis. It weakly inhibits ADP-induced platelet aggregation when tested on platelet rich plasma from human and rabbit blood (15-25% of inhibition at 5-10 ug of enzyme), and dose-dependently inhibits blood coagulation, possibly by inhibiting thrombin activation. Exhibits high hydrolytic activities toward L-dipalmitoyl phosphatidylcholine. PLA2 catalyzes the calcium-dependent hydrolysis of the 2-acyl groups in 3-sn-phosphoglycerides. The protein is Acidic phospholipase A2 Tpu-E6c of Craspedocephalus puniceus (Flat-nosed pitviper).